The primary structure comprises 462 residues: A-type ATP synthase subunit B (462 aa).

Belongs to the ATPase alpha/beta chains family. In terms of assembly, has multiple subunits with at least A(3), B(3), C, D, E, F, H, I and proteolipid K(x).

The protein resides in the cell membrane. Functionally, component of the A-type ATP synthase that produces ATP from ADP in the presence of a proton gradient across the membrane. The B chain is a regulatory subunit. The polypeptide is A-type ATP synthase subunit B (Cenarchaeum symbiosum (strain A)).